The following is a 431-amino-acid chain: Adenylosuccinate synthetase (431 aa).

GTP-binding positions include G12–K18 and G40–T42. D13 serves as the catalytic Proton acceptor. Residues D13 and G40 each contribute to the Mg(2+) site. IMP contacts are provided by residues D13–K16, N38–H41, T131, R145, Q225, T240, and R304. The active-site Proton donor is H41. Position 300-306 (V300–R306) interacts with substrate. Residues R306, K332 to D334, and S414 to S416 each bind GTP.

This sequence belongs to the adenylosuccinate synthetase family. As to quaternary structure, homodimer. It depends on Mg(2+) as a cofactor.

The protein resides in the cytoplasm. It catalyses the reaction IMP + L-aspartate + GTP = N(6)-(1,2-dicarboxyethyl)-AMP + GDP + phosphate + 2 H(+). The protein operates within purine metabolism; AMP biosynthesis via de novo pathway; AMP from IMP: step 1/2. Plays an important role in the de novo pathway of purine nucleotide biosynthesis. Catalyzes the first committed step in the biosynthesis of AMP from IMP. This is Adenylosuccinate synthetase from Rhizobium rhizogenes (strain K84 / ATCC BAA-868) (Agrobacterium radiobacter).